The chain runs to 294 residues: Elongation factor Ts (294 aa).

The interval 80–83 (TDFV) is involved in Mg(2+) ion dislocation from EF-Tu.

This sequence belongs to the EF-Ts family.

The protein localises to the cytoplasm. In terms of biological role, associates with the EF-Tu.GDP complex and induces the exchange of GDP to GTP. It remains bound to the aminoacyl-tRNA.EF-Tu.GTP complex up to the GTP hydrolysis stage on the ribosome. The sequence is that of Elongation factor Ts from Polynucleobacter asymbioticus (strain DSM 18221 / CIP 109841 / QLW-P1DMWA-1) (Polynucleobacter necessarius subsp. asymbioticus).